The sequence spans 861 residues: Translation initiation factor IF-2 (861 aa).

Disordered stretches follow at residues Met-1 to Ala-69 and Ala-92 to Lys-273. The segment covering Gly-53–Gly-65 has biased composition (gly residues). The span at Ala-94 to Asp-108 shows a compositional bias: basic and acidic residues. A compositionally biased stretch (low complexity) spans Ala-109 to Gln-120. 2 stretches are compositionally biased toward basic and acidic residues: residues Arg-121–Ala-155 and Asp-163–Pro-186. Low complexity predominate over residues Pro-213 to Arg-223. The segment covering Arg-255–Lys-273 has biased composition (basic and acidic residues). The tr-type G domain occupies Pro-357–Lys-527. A G1 region spans residues Gly-366–Thr-373. Residue Gly-366–Thr-373 coordinates GTP. A G2 region spans residues Gly-391 to His-395. The interval Asp-413 to Gly-416 is G3. Residues Asp-413–His-417 and Asn-467–Asp-470 each bind GTP. The interval Asn-467–Asp-470 is G4. Residues Ser-503 to Lys-505 are G5.

It belongs to the TRAFAC class translation factor GTPase superfamily. Classic translation factor GTPase family. IF-2 subfamily.

It is found in the cytoplasm. In terms of biological role, one of the essential components for the initiation of protein synthesis. Protects formylmethionyl-tRNA from spontaneous hydrolysis and promotes its binding to the 30S ribosomal subunits. Also involved in the hydrolysis of GTP during the formation of the 70S ribosomal complex. The sequence is that of Translation initiation factor IF-2 from Maricaulis maris (strain MCS10) (Caulobacter maris).